The chain runs to 479 residues: mRNA export factor ICP27 homolog (479 aa).

The segment covering 1–15 (MVPSQRLSRTSSISS) has biased composition (low complexity). Disordered regions lie at residues 1–78 (MVPS…SSVV) and 92–210 (KWDL…NKPW). The span at 35–44 (TDCDMDPMEG) shows a compositional bias: acidic residues. The span at 132–142 (EVHGCTDESYG) shows a compositional bias: basic and acidic residues. Zn(2+)-binding residues include Cys354, His445, Cys449, and Cys454. A CHC2-type zinc finger spans residues 354 to 454 (CFLPNTRDYN…HTRDCRSASC (101 aa)).

This sequence belongs to the HHV-1 ICP27 protein family. As to quaternary structure, interacts with host XPO1 and with the XPO1 export pathway components small GTPase RAN and nucleoporin NUP214. Interacts with host SPEN, OTT1 and OTT3. Interacts with host SRSF1, SRSF3, SRSF7 and SRPK1. Interacts with host DHX9; this interaction may have an inhibitory effect on virion production. Interacts (via N-terminus) with host NXF1; this interaction plays a role in mRNA export. Post-translationally, phosphorylated by cellular protein kinase CK2.

It localises to the host nucleus. Its subcellular location is the host cytoplasm. Its function is as follows. Promotes the nuclear export of a subset of early and late viral mRNAs by interacting with mRNAs and cellular export proteins. Additionally may prevent the establishment of cellular antiviral state, by acting as an alternative splicing factor for cellular RNAs such as STAT1, resulting in a STAT1 mRNA incapable of producing the STAT1alpha isoform. This Homo sapiens (Human) protein is mRNA export factor ICP27 homolog.